A 338-amino-acid polypeptide reads, in one-letter code: Cytochrome c biogenesis protein CcsA (338 aa).

Transmembrane regions (helical) follow at residues 15 to 35, 36 to 56, 71 to 91, 97 to 117, 142 to 162, 246 to 266, 273 to 293, and 307 to 327; these read FLVL…PNIP, GLTG…ATLL, LYES…VAEW, WVGV…ALSL, VMMI…AFLI, IIGL…VWAN, WSWD…AAYL, and AFLA…VNIL.

The protein belongs to the CcmF/CycK/Ccl1/NrfE/CcsA family. As to quaternary structure, may interact with ccs1.

Its subcellular location is the cellular thylakoid membrane. Its function is as follows. Required during biogenesis of c-type cytochromes (cytochrome c6 and cytochrome f) at the step of heme attachment. The chain is Cytochrome c biogenesis protein CcsA from Picosynechococcus sp. (strain ATCC 27264 / PCC 7002 / PR-6) (Agmenellum quadruplicatum).